The chain runs to 95 residues: Transcription and mRNA export factor ENY2-1 (95 aa).

This sequence belongs to the ENY2 family. As to quaternary structure, component of the nuclear pore complex (NPC)-associated TREX-2 complex (transcription and export complex 2). Component of the SAGA transcription coactivator-HAT complex. Within the SAGA complex, participates in a subcomplex of SAGA called the DUB module (deubiquitination module).

The protein localises to the nucleus. It localises to the nucleoplasm. Involved in mRNA export coupled transcription activation by association with both the TREX-2 and the SAGA complexes. The transcription regulatory histone acetylation (HAT) complex SAGA is a multiprotein complex that activates transcription by remodeling chromatin and mediating histone acetylation and deubiquitination. Within the SAGA complex, participates in a subcomplex that specifically deubiquitinates histones. The SAGA complex is recruited to specific gene promoters by activators, where it is required for transcription. The TREX-2 complex functions in docking export-competent ribonucleoprotein particles (mRNPs) to the nuclear entrance of the nuclear pore complex (nuclear basket). TREX-2 participates in mRNA export and accurate chromatin positioning in the nucleus by tethering genes to the nuclear periphery. The chain is Transcription and mRNA export factor ENY2-1 (eny2-1) from Salmo salar (Atlantic salmon).